We begin with the raw amino-acid sequence, 430 residues long: Probable transporter SCO4007 (430 aa).

The segment covering 1–17 (MPSSPSSTTPAPTSTPA) has biased composition (low complexity). A disordered region spans residues 1–26 (MPSSPSSTTPAPTSTPAARREPSGKG). The next 11 helical transmembrane spans lie at 34 to 54 (LFLP…YLAA), 70 to 90 (AVAW…LFFA), 101 to 121 (LVAA…ASAG), 126 to 146 (AGAV…VPLV), 159 to 179 (VAAV…LGGL), 188 to 208 (AVFV…AYIL), 244 to 264 (AGMY…LTEG), 275 to 295 (GLFG…GGLV), 315 to 335 (VPLF…AVLV), 362 to 382 (TAYV…AGPA), and 383 to 403 (FGHW…VLGW).

The protein belongs to the major facilitator superfamily.

The protein localises to the cell membrane. The sequence is that of Probable transporter SCO4007 from Streptomyces coelicolor (strain ATCC BAA-471 / A3(2) / M145).